The chain runs to 40 residues: Esterase-4 (40 aa).

The protein belongs to the type-B carboxylesterase/lipase family.

The enzyme catalyses a carboxylic ester + H2O = an alcohol + a carboxylate + H(+). In Drosophila mojavensis (Fruit fly), this protein is Esterase-4 (Est-4).